The primary structure comprises 467 residues: Ribulose bisphosphate carboxylase large chain (467 aa).

Residue lysine 5 is modified to N6,N6,N6-trimethyllysine. Asparagine 114 and threonine 164 together coordinate substrate. Catalysis depends on lysine 166, which acts as the Proton acceptor. Residue lysine 168 coordinates substrate. Mg(2+)-binding residues include lysine 192, aspartate 194, and glutamate 195. At lysine 192 the chain carries N6-carboxylysine. Catalysis depends on histidine 285, which acts as the Proton acceptor. 3 residues coordinate substrate: arginine 286, histidine 318, and serine 370.

It belongs to the RuBisCO large chain family. Type I subfamily. In terms of assembly, heterohexadecamer of 8 large chains and 8 small chains; disulfide-linked. The disulfide link is formed within the large subunit homodimers. Mg(2+) serves as cofactor. In terms of processing, the disulfide bond which can form in the large chain dimeric partners within the hexadecamer appears to be associated with oxidative stress and protein turnover.

Its subcellular location is the plastid. The protein localises to the chloroplast. It catalyses the reaction 2 (2R)-3-phosphoglycerate + 2 H(+) = D-ribulose 1,5-bisphosphate + CO2 + H2O. It carries out the reaction D-ribulose 1,5-bisphosphate + O2 = 2-phosphoglycolate + (2R)-3-phosphoglycerate + 2 H(+). In terms of biological role, ruBisCO catalyzes two reactions: the carboxylation of D-ribulose 1,5-bisphosphate, the primary event in carbon dioxide fixation, as well as the oxidative fragmentation of the pentose substrate in the photorespiration process. Both reactions occur simultaneously and in competition at the same active site. The chain is Ribulose bisphosphate carboxylase large chain from Jasminum simplicifolium subsp. suavissimum (Native jasmine).